The chain runs to 219 residues: Protein VERNALIZATION 2 (219 aa).

The CCT domain maps to 138–180; sequence REAKVMRYREKKKRRRYEKQIRYESRKAYAEMRPRVKGRFAKV.

As to expression, mainly expressed in leaves, and at low levels in the shoot apical meristem (SAM).

Its subcellular location is the nucleus. Functionally, involved in the regulation of vernalization; this process in essential for flowering in cv. Bd29-1 but seems do not occur in cv. Bd21. The protein is Protein VERNALIZATION 2 of Brachypodium distachyon (Purple false brome).